The chain runs to 278 residues: Ras-related protein Rab-40B (278 aa).

Positions 23, 26, and 27 each coordinate GTP. A switch-I region spans residues 41-49 (SPYGHPAGI). Asp69 contacts Mg(2+). 3 residues coordinate GTP: Gly72, Asn126, and Arg127. The tract at residues 72 to 88 (GQGRFCTIFRSYSRGAQ) is switch-II. Positions 175-228 (LLRHGMDRLWRPSKVLSLQELCCRAVVSCTPGHLVDKLPLPVALRSHLKSFSMA) constitute an SOCS box domain. The tract at residues 245–278 (ANSSHKRNSFRKVRTIRPPQSPPRNCARNSCKIS) is disordered. Residues 248 to 259 (SHKRNSFRKVRT) show a composition bias toward basic residues. Cys270 carries the S-palmitoyl cysteine lipid modification. Cys275 carries the S-geranylgeranyl cysteine lipid modification.

Belongs to the small GTPase superfamily. Rab family. In terms of assembly, component of the cullin-5-RING E3 ubiquitin-protein ligase complex (ECS(RAB40B) complex) composed of CUL5, Elongin BC (ELOB and ELOC), RNF7/RBX2 and RAB40B; RAB40B interaction with ECS complex is GTP-independent. Binds (GTP-bound) LIMA1; interaction promotes LIMA1 subcellular localization in lamellipodia during cell migration. Interacts (GTP-bound) with TKS5/SH3PXD2A (via PX domain); interaction promotes invadopodia-mediated extracellular matrix degradation. It depends on Mg(2+) as a cofactor.

The protein localises to the cell membrane. The protein resides in the cytoplasm. It is found in the cytosol. Its subcellular location is the cell projection. It localises to the lamellipodium membrane. The protein localises to the ruffle. It carries out the reaction GTP + H2O = GDP + phosphate + H(+). The protein operates within protein modification; protein ubiquitination. With respect to regulation, regulated by guanine nucleotide exchange factors (GEFs) which promote the exchange of bound GDP for free GTP. Regulated by GTPase activating proteins (GAPs) which increase the GTP hydrolysis activity. Inhibited by GDP dissociation inhibitors (GDIs). Its function is as follows. RAB40B small GTPase acts as substrate-recognition components of the ECS(RAB40B) E3 ubiquitin ligase complex which mediates the ubiquitination of target proteins. The Rab40 subfamily belongs to the Rab family that are key regulators of intracellular membrane trafficking, from the formation of transport vesicles to their fusion with membranes. Rabs cycle between an inactive GDP-bound form and an active GTP-bound form that is able to recruit to membranes different sets of downstream effectors directly responsible for vesicle formation, movement, tethering and fusion. As part of the ECS(RAB40B) complex, GTP-bound RAB40B promotes LIMA1/EPLIN ubiquitination and degradation, thereby regulating leading-edge actin dynamics during cell migration. As part of the ECS(RAB40B) complex, GTP-bound RAB40B also ubiquitinates RAP2A GTPase which promotes its localization to lamellipodia and activation to drive cell migration. The ECS(RAB40B) complex does not mediate canonical ubiquitin-dependent degradation of RAP2. RAB40B also binds TKS5/SH3PXD2A effector independently from ECS complex to promote invadopodia-mediated extracellular matrix degradation. This Mus musculus (Mouse) protein is Ras-related protein Rab-40B.